A 148-amino-acid chain; its full sequence is MATTKIILKKSVNNLGHAGDIVEVKAGYARNYLIPQGYAFPWTKGAAAQAEAMKRARLAKAIATREGAVEAKQIIEGTAVEIFAKVSESGKLFGGISNEQIANALAEKVAVDPKGITVEKIQTLGEFPATVALHPEISANFFVKVVAE.

It belongs to the bacterial ribosomal protein bL9 family.

Binds to the 23S rRNA. The chain is Large ribosomal subunit protein bL9 from Bifidobacterium animalis subsp. lactis (strain AD011).